We begin with the raw amino-acid sequence, 322 residues long: MLTDLIIELQQTLGILHKQDIQLASRQGQQRLIGDGEAIRLGDDCAAIPDENGYLLLAAEGMAPSLITQDPWFAGWCSVLVNVSDIYAMGGRPIAVVDALWSKSSDQAQQIWAGMQAASARFNVPIVGGHTNTHSGYDALGVAILGRAKSLITSFDAQVGDRLILVSNFQGKPRPNAPYCWDAATMAETETLQKHWDLLPYLAENKLCDAGKDVSMGGIIGTALMLLETSKCGAILDLDAISCPAGLDFRQWLLSFPSYGFLLSVRPQFVKTVKACFQAEGLIAEAIATIQPGHNLTLKLGSESQLFWDLQQNPLTGFTGDS.

It to M.jannaschii MJ0640 and MJ0799.

This is an uncharacterized protein from Synechocystis sp. (strain ATCC 27184 / PCC 6803 / Kazusa).